A 463-amino-acid polypeptide reads, in one-letter code: MSAGGPCPAGAGGGPGGSSCPVGVSPGGVSMFRWLEVLEKEFDKAFVDVDLLLGEIDPDQADITYEGRQKMTSLSSCFAQLCHKAQTVSQINHKLEAQLVDLRSELTETQAEKVVLEKEVHEQLLQLHSTQLQLHAKTGQSVDSGAIKAKLSVHSVEDLERELEANKTEKVKEARLEAEVKLLRKENEALRRHIAVLQAEVYGARLAAKYLDKELAGRVQQIQLLGRDMKGPAHDKLWNQLEAEIHLHRHKTVIRACRGRNDLKRPMQAPPGHDQDSLKKSQGVGPIRKVLLLKEDHEGLGISITGGKEHGVPILISEIHPGQPADRCGGLHVGDAILAVNGVNLRDTKHKEAVTILSQQRGEIEFEVVYVAPEVDSDDENVEYEDESGHRYRLYLDELEGSGNSGASCKDSSGEMKMLQGYNKKAVRDAHENGDVGAAGESPLDDTAARAAHLHSLHQKKAY.

Position 2 is an N-acetylserine (serine 2). Residues 85 to 201 are a coiled coil; that stretch reads AQTVSQINHK…RHIAVLQAEV (117 aa). A PDZ domain is found at 289–372; the sequence is KVLLLKEDHE…EIEFEVVYVA (84 aa). Serine 402 and serine 405 each carry phosphoserine.

Homooligomer. Interacts with FZD5. Interacts with FZD8. Interacts with GRID2 and BECN1. Interacts with CSPG5. Interacts with CLCN3. Interacts with STX6. Interacts with CFTR. Interacts with ASIC3. Interacts with GOLGA3. Interacts with NLGN1. Interacts with RHOQ. Interacts with MARCHF2; the interaction leads to CFTR ubiquitination and degradation. May interact with CACNG2. Interacts with CCDC62. As to expression, ubiquitously expressed (at protein level). Expressed in dorsal root glanglion (DRG), spinal cord and brain. Isoform 1 is preferentially expressed in whole brain (at protein level) and cerebellum. Expressed in spermatocytes and spermatides but not in Sertoli cells and spermatogonia.

It localises to the cytoplasm. It is found in the golgi apparatus membrane. The protein localises to the golgi apparatus. Its subcellular location is the trans-Golgi network membrane. The protein resides in the synapse. It localises to the postsynaptic density. It is found in the cell projection. The protein localises to the dendrite. Its function is as follows. Plays a role in intracellular protein trafficking and degradation. May regulate CFTR chloride currents and acid-induced ASIC3 currents by modulating cell surface expression of both channels. May also regulate the intracellular trafficking of the ADR1B receptor. May play a role in autophagy. Together with MARCHF2 mediates the ubiquitination and lysosomal degradation of CFTR. Overexpression results in CFTR intracellular retention and degradation in the lysosomes. This chain is Golgi-associated PDZ and coiled-coil motif-containing protein, found in Mus musculus (Mouse).